Here is a 527-residue protein sequence, read N- to C-terminus: Protein PyrBI (527 aa).

The tract at residues 1 to 342 (MKRDFLGRTL…MFGGALEAPF (342 aa)) is aspartate carbamoyltransferase. The linker stretch occupies residues 343 to 357 (DTSKKEEKPEEDFII). The interval 368–527 (VQKEGKRGIK…PHSFEEIWSI (160 aa)) is aspartate carbamoyltransferase regulatory region. Cys-483, Cys-488, Cys-512, and Cys-515 together coordinate Zn(2+).

In the N-terminal section; belongs to the aspartate/ornithine carbamoyltransferase superfamily. ATCase family. It in the C-terminal section; belongs to the PyrI family.

The enzyme catalyses carbamoyl phosphate + L-aspartate = N-carbamoyl-L-aspartate + phosphate + H(+). Its pathway is pyrimidine metabolism; UMP biosynthesis via de novo pathway; (S)-dihydroorotate from bicarbonate: step 2/3. The polypeptide is Protein PyrBI (pyrBI) (Thermotoga maritima (strain ATCC 43589 / DSM 3109 / JCM 10099 / NBRC 100826 / MSB8)).